The following is a 140-amino-acid chain: Resuscitation-promoting factor RpfC (140 aa).

The signal sequence occupies residues 1-31 (MTRIAKPLIKSAMAAGLVTASMSLSTAVAHA).

This sequence belongs to the transglycosylase family. Rpf subfamily.

It is found in the secreted. Factor that stimulates resuscitation of dormant cells. Has peptidoglycan (PG) hydrolytic activity. This is Resuscitation-promoting factor RpfC (rpfC) from Mycobacterium tuberculosis (strain ATCC 35801 / TMC 107 / Erdman).